The primary structure comprises 83 residues: U20-theraphotoxin-Cg1a 2 (83 aa).

The signal sequence occupies residues 1–21 (MQVSVLITLAVLGVMFVWTSA). The propeptide occupies 22 to 47 (AELEERGSDQPAWLKSLERIFQSEER). 3 disulfides stabilise this stretch: cysteine 49–cysteine 63, cysteine 56–cysteine 68, and cysteine 62–cysteine 76.

This sequence belongs to the neurotoxin 10 (Hwtx-1) family. 40 (Jztx-35) subfamily. As to expression, expressed by the venom gland.

It is found in the secreted. Probable ion channel inhibitor. The chain is U20-theraphotoxin-Cg1a 2 from Chilobrachys guangxiensis (Chinese earth tiger tarantula).